The primary structure comprises 45 residues: Mu-conotoxin-like Cal 12.1.2a (45 aa).

4 disulfide bridges follow: Cys3/Cys16, Cys11/Cys28, Cys18/Cys33, and Cys27/Cys39. Pro23 is modified (4-hydroxyproline). 2 positions are modified to 6'-bromotryptophan: Trp37 and Trp38. A 4-hydroxyproline modification is found at Pro40. Trp44 carries the post-translational modification 6'-bromotryptophan.

As to expression, expressed by the venom duct.

Its subcellular location is the secreted. Its function is as follows. Mu-conotoxins block voltage-gated sodium channels. This toxin reversibly blocks voltage-gated sodium channel in cephalopods, with no alteration in the voltage dependence of sodium conductance or on the kinetics of inactivation. The sequence is that of Mu-conotoxin-like Cal 12.1.2a from Californiconus californicus (California cone).